The primary structure comprises 409 residues: Translation initiation factor 2 subunit gamma (409 aa).

The tr-type G domain maps to 7 to 203 (QPEVNIGLVG…TIESEIPTPD (197 aa)). Residues 16–23 (GHVDHGKT) form a G1 region. Residues D19, T23, G44, and S46 each coordinate Mg(2+). 19–24 (DHGKTT) contacts GTP. The segment at 44–48 (GISIR) is G2. The tract at residues 90–93 (DAPG) is G3. Residues 146 to 149 (NKID) and 181 to 183 (SAQ) contribute to the GTP site. A G4 region spans residues 146-149 (NKID). The tract at residues 181 to 183 (SAQ) is G5.

The protein belongs to the TRAFAC class translation factor GTPase superfamily. Classic translation factor GTPase family. EIF2G subfamily. Heterotrimer composed of an alpha, a beta and a gamma chain. Mg(2+) is required as a cofactor.

It carries out the reaction GTP + H2O = GDP + phosphate + H(+). EIF-2 functions in the early steps of protein synthesis by forming a ternary complex with GTP and initiator tRNA. This chain is Translation initiation factor 2 subunit gamma, found in Natronomonas pharaonis (strain ATCC 35678 / DSM 2160 / CIP 103997 / JCM 8858 / NBRC 14720 / NCIMB 2260 / Gabara) (Halobacterium pharaonis).